The following is a 243-amino-acid chain: ATP synthase subunit a (243 aa).

A run of 8 helical transmembrane segments spans residues 28 to 48 (SSLY…AGVF), 52 to 72 (VIPG…LGII), 83 to 103 (YFPL…VGML), 114 to 134 (HIVV…LIGL), 141 to 161 (FFAM…MIFL), 177 to 197 (LTAN…FVYP), 200 to 220 (LLIS…EVFI), and 221 to 241 (AMLQ…DSLF).

Belongs to the ATPase A chain family. As to quaternary structure, F-type ATPases have 2 components, CF(1) - the catalytic core - and CF(0) - the membrane proton channel. CF(1) has five subunits: alpha(3), beta(3), gamma(1), delta(1), epsilon(1). CF(0) has three main subunits: a(1), b(2) and c(9-12). The alpha and beta chains form an alternating ring which encloses part of the gamma chain. CF(1) is attached to CF(0) by a central stalk formed by the gamma and epsilon chains, while a peripheral stalk is formed by the delta and b chains.

Its subcellular location is the cell inner membrane. Functionally, key component of the proton channel; it plays a direct role in the translocation of protons across the membrane. The sequence is that of ATP synthase subunit a from Neorickettsia sennetsu (strain ATCC VR-367 / Miyayama) (Ehrlichia sennetsu).